We begin with the raw amino-acid sequence, 314 residues long: Methenyltetrahydromethanopterin cyclohydrolase (314 aa).

It belongs to the MCH family.

Its subcellular location is the cytoplasm. It catalyses the reaction 5,10-methenyl-5,6,7,8-tetrahydromethanopterin + H2O = N(5)-formyl-5,6,7,8-tetrahydromethanopterin + H(+). Its pathway is one-carbon metabolism; methanogenesis from CO(2); 5,10-methenyl-5,6,7,8-tetrahydromethanopterin from CO(2): step 3/3. Functionally, catalyzes the reversible interconversion of 5-formyl-H(4)MPT to methenyl-H(4)MPT(+). The chain is Methenyltetrahydromethanopterin cyclohydrolase from Methanoregula boonei (strain DSM 21154 / JCM 14090 / 6A8).